The following is a 296-amino-acid chain: 6-hydroxypseudooxynicotine dehydrogenase complex subunit alpha (296 aa).

In terms of domain architecture, FAD-binding PCMH-type spans Met1–His177. Residues Ile30–Leu37, Thr111–Ser115, and Glu124 each bind FAD.

In terms of assembly, heterohexamer of 2 alpha (kdhA), 2 beta (kdhB) and 2 gamma (kdhC) subunit. Dimer of heterotrimers. The cofactor is FAD.

The enzyme catalyses 6-hydroxypseudooxynicotine + A + H2O = 2,6-dihydroxypseudooxynicotine + AH2. It participates in alkaloid degradation; nicotine degradation. In terms of biological role, molybdo-flavoprotein enzyme complex involved in nicotine degradation. The subunit gamma (large subunit) contains the substrate-binding sites, the subunit alpha (medium subunit) binds FAD and the subunit beta (small subunit) has a 2Fe-2S ferredoxin-type domain which binds 2 2Fe-2S clusters. The protein is 6-hydroxypseudooxynicotine dehydrogenase complex subunit alpha (kdhA) of Paenarthrobacter nicotinovorans (Arthrobacter nicotinovorans).